A 418-amino-acid chain; its full sequence is MTNSIEQAWDLAKQRFAAVGVDVDAALTRLDTLPVSMHCWQGDDVTGFEDPDGVLTGGIQATGNYPGKARNATELRSDLELALALIPGPKRLNLHAIYLESDTPVARNKIEPRHFSHWVAWAKKHQLGLDFNPSCFSHPLSADGFTLSHADPEIRQFWIEHCQASRRISAYFGEQLGTPSVMNIWIPDGMKDTPIDRLAPRQRLLSALDEVISEKLNPAHHIDAVESKLFGIGAESYTVGSNEFYMGYAASRQTALCLDAGHFHPTEVISDKISSAMLYVPRLLLHVSRPVRWDSDHVVLLDDETQAIASEIIRHNLFDRVHIGLDFFDASINRIAAWVIGTRNMKKALLRALLEPTDRLRQLELRGDYTARLALLEEQKSLPWQAIWEGYCQRNDVPVDARWLDAVREYEQQILSQR.

Residues histidine 262, aspartate 294, and aspartate 296 each coordinate Mn(2+).

The protein belongs to the rhamnose isomerase family. In terms of assembly, homotetramer. The cofactor is Mn(2+).

It is found in the cytoplasm. The catalysed reaction is L-rhamnopyranose = L-rhamnulose. The protein operates within carbohydrate degradation; L-rhamnose degradation; glycerone phosphate from L-rhamnose: step 1/3. In terms of biological role, catalyzes the interconversion of L-rhamnose and L-rhamnulose. The protein is L-rhamnose isomerase of Yersinia pseudotuberculosis serotype O:1b (strain IP 31758).